The chain runs to 616 residues: Dihydroxy-acid dehydratase (616 aa).

Asp-81 contributes to the Mg(2+) binding site. Cys-122 contributes to the [2Fe-2S] cluster binding site. Mg(2+)-binding residues include Asp-123 and Lys-124. Lys-124 is modified (N6-carboxylysine). Cys-195 contacts [2Fe-2S] cluster. Glu-491 lines the Mg(2+) pocket. Ser-517 acts as the Proton acceptor in catalysis.

This sequence belongs to the IlvD/Edd family. In terms of assembly, homodimer. [2Fe-2S] cluster is required as a cofactor. Requires Mg(2+) as cofactor.

It carries out the reaction (2R)-2,3-dihydroxy-3-methylbutanoate = 3-methyl-2-oxobutanoate + H2O. The catalysed reaction is (2R,3R)-2,3-dihydroxy-3-methylpentanoate = (S)-3-methyl-2-oxopentanoate + H2O. Its pathway is amino-acid biosynthesis; L-isoleucine biosynthesis; L-isoleucine from 2-oxobutanoate: step 3/4. The protein operates within amino-acid biosynthesis; L-valine biosynthesis; L-valine from pyruvate: step 3/4. In terms of biological role, functions in the biosynthesis of branched-chain amino acids. Catalyzes the dehydration of (2R,3R)-2,3-dihydroxy-3-methylpentanoate (2,3-dihydroxy-3-methylvalerate) into 2-oxo-3-methylpentanoate (2-oxo-3-methylvalerate) and of (2R)-2,3-dihydroxy-3-methylbutanoate (2,3-dihydroxyisovalerate) into 2-oxo-3-methylbutanoate (2-oxoisovalerate), the penultimate precursor to L-isoleucine and L-valine, respectively. This Shigella sonnei (strain Ss046) protein is Dihydroxy-acid dehydratase.